The sequence spans 225 residues: PKHD-type hydroxylase YbiX (225 aa).

Positions 78 to 177 (TLSTPLFNRY…RVASFMWIQS (100 aa)) constitute a Fe2OG dioxygenase domain. Fe cation contacts are provided by H96, D98, and H158. R168 contributes to the 2-oxoglutarate binding site.

It depends on Fe(2+) as a cofactor. L-ascorbate serves as cofactor.

The polypeptide is PKHD-type hydroxylase YbiX (Escherichia coli O81 (strain ED1a)).